A 57-amino-acid polypeptide reads, in one-letter code: MTLFQLLREHWVHILVPAGFVFGCYLDRKDDEKLTAFRNKSMLFQRELRPNEEVTWK.

A helical transmembrane segment spans residues 10–26; it reads HWVHILVPAGFVFGCYL.

The protein belongs to the complex I NDUFB1 subunit family. In terms of assembly, complex I is composed of 45 different subunits.

The protein resides in the mitochondrion inner membrane. Functionally, accessory subunit of the mitochondrial membrane respiratory chain NADH dehydrogenase (Complex I) that is believed not to be involved in catalysis. Complex I functions in the transfer of electrons from NADH to the respiratory chain. The immediate electron acceptor for the enzyme is believed to be ubiquinone. The chain is NADH dehydrogenase [ubiquinone] 1 beta subcomplex subunit 1 (Ndufb1) from Mus musculus (Mouse).